A 70-amino-acid chain; its full sequence is DNA-directed RNA polymerase subunit omega (70 aa).

The protein belongs to the RNA polymerase subunit omega family. In terms of assembly, the RNAP catalytic core consists of 2 alpha, 1 beta, 1 beta' and 1 omega subunit. When a sigma factor is associated with the core the holoenzyme is formed, which can initiate transcription.

The enzyme catalyses RNA(n) + a ribonucleoside 5'-triphosphate = RNA(n+1) + diphosphate. Functionally, promotes RNA polymerase assembly. Latches the N- and C-terminal regions of the beta' subunit thereby facilitating its interaction with the beta and alpha subunits. The chain is DNA-directed RNA polymerase subunit omega from Caldanaerobacter subterraneus subsp. tengcongensis (strain DSM 15242 / JCM 11007 / NBRC 100824 / MB4) (Thermoanaerobacter tengcongensis).